A 108-amino-acid polypeptide reads, in one-letter code: C-C motif chemokine 19 (108 aa).

The first 25 residues, 1–25 (MAPRVTPLLAFSLLVLWTFPAPTLG), serve as a signal peptide directing secretion. 2 disulfides stabilise this stretch: Cys-33–Cys-59 and Cys-34–Cys-75. Asn-100 carries N-linked (GlcNAc...) asparagine glycosylation.

The protein belongs to the intercrine beta (chemokine CC) family. In terms of assembly, interacts with TNFAIP6 (via Link domain). In terms of tissue distribution, highly expressed by dendritic cells in mesenteric and peripheral lymph nodes. Significant expression in spleen (T cell zone or periarteriolar lymphatic sheath) and Peyer patches. Low expression in thymus.

It localises to the secreted. Functionally, strongly chemotactic for naive (L-selectinhi) CD4 T-cells and for CD8 T-cells and weakly attractive for resting B-cells and memory (L-selectinlo) CD4 T-cells. May play a role in promoting encounters between recirculating T-cells and dendritic cells and in the migration of activated B-cells into the T-zone of secondary lymphoid tissues. Binds to chemokine receptor CCR7. Binds to atypical chemokine receptor ACKR4 and mediates the recruitment of beta-arrestin (ARRB1/2) to ACKR4. The polypeptide is C-C motif chemokine 19 (Ccl19) (Mus musculus (Mouse)).